We begin with the raw amino-acid sequence, 142 residues long: Large ribosomal subunit protein uL13 (142 aa).

Belongs to the universal ribosomal protein uL13 family. In terms of assembly, part of the 50S ribosomal subunit.

In terms of biological role, this protein is one of the early assembly proteins of the 50S ribosomal subunit, although it is not seen to bind rRNA by itself. It is important during the early stages of 50S assembly. The chain is Large ribosomal subunit protein uL13 from Pasteurella multocida (strain Pm70).